The chain runs to 327 residues: Deaminated glutathione amidase (327 aa).

The transit peptide at 1-13 (MLGFITRPPHRFL) directs the protein to the mitochondrion. In terms of domain architecture, CN hydrolase spans 46-298 (LPLVAVCQVT…PGLCLARIDL (253 aa)). Residue Glu-86 is the Proton acceptor of the active site. Catalysis depends on Lys-161, which acts as the Proton donor. The Nucleophile role is filled by Cys-203.

Belongs to the carbon-nitrogen hydrolase superfamily. NIT1/NIT2 family. As to expression, detected in heart, brain, placenta, liver, skeletal muscle, kidney and pancreas.

It is found in the mitochondrion. The protein localises to the cytoplasm. The enzyme catalyses N-(4-oxoglutaryl)-L-cysteinylglycine + H2O = L-cysteinylglycine + 2-oxoglutarate. Catalyzes the hydrolysis of the amide bond in N-(4-oxoglutarate)-L-cysteinylglycine (deaminated glutathione), a metabolite repair reaction to dispose of the harmful deaminated glutathione. Plays a role in cell growth and apoptosis: loss of expression promotes cell growth, resistance to DNA damage stress and increased incidence to NMBA-induced tumors. Has tumor suppressor properties that enhances the apoptotic responsiveness in cancer cells; this effect is additive to the tumor suppressor activity of FHIT. It is also a negative regulator of primary T-cells. The protein is Deaminated glutathione amidase (NIT1) of Homo sapiens (Human).